The chain runs to 312 residues: Dipeptide transport ATP-binding protein DppF (312 aa).

The ABC transporter domain maps to 10 to 255; sequence IKNLDLTFNK…PIHPYTKSLL (246 aa). Position 45–52 (45–52) interacts with ATP; it reads GESGSGKT.

Belongs to the ABC transporter superfamily. As to quaternary structure, the complex is composed of two ATP-binding proteins (DppD and DppF), two transmembrane proteins (DppB and DppC) and a solute-binding protein (DppA).

The protein resides in the cell membrane. The enzyme catalyses a dipeptide(out) + ATP + H2O = a dipeptide(in) + ADP + phosphate + H(+). Functionally, part of the ABC transporter DppABCDF involved in dipeptide transport. Responsible for energy coupling to the transport system. The sequence is that of Dipeptide transport ATP-binding protein DppF from Lactococcus lactis subsp. cremoris (strain MG1363).